The chain runs to 639 residues: ADP-ribosylation factor-binding protein GGA1 (639 aa).

Met-1 is subject to N-acetylmethionine. A VHS domain is found at 17–147; it reads ATNPLNKELD…MLKKQGIVKS (131 aa). Residues 114–274 are interaction with ARF3; the sequence is KILELLYSWT…RLASDTEDND (161 aa). Residues 171 to 299 form the GAT domain; that stretch reads DEEKSKMLAR…VINLYKQLVR (129 aa). A Phosphoserine modification is found at Ser-185. The interval 300-509 is unstructured hinge; the sequence is GEEVNGDATA…ITVPLESIKP (210 aa). Disordered regions lie at residues 320 to 421 and 434 to 492; these read LDLS…SGLD and SLPP…QPVP. Ser-355 bears the Phosphoserine; by CK2 mark. The short motif at 358–362 is the Autoinhibitory element; sequence DDELM. The segment covering 381-390 has biased composition (polar residues); it reads GWNSFQSSDA. Ser-418 bears the Phosphoserine mark. The span at 462–480 shows a compositional bias: low complexity; the sequence is SSSCSSPSSSATSLLHTVS. Pro residues predominate over residues 481–490; the sequence is PEPPRPPQQP. The GAE domain maps to 510–631; sequence SNILPVTVYD…NEMGDVDQFP (122 aa).

The protein belongs to the GGA protein family. In terms of assembly, monomer. Interacts with GGA2 and GGA3. Binds to clathrin and activated ARFs, including ARF1, ARF5 and ARF6. Interacts with RABEP1. Interacts with RABGEF1. Interacts with the type-I membrane proteins LRP3, M6PR/CD-MPR and IGF2R/CI-MPR. Interacts (via N-terminal VHS domain) with SORL1/sorLA and SORT1 (via C-terminal cytosolic domain). Interacts with EPN4. Interacts with CCDC91. Interacts with HEATR5B/p200a. Interacts with SYNRG/gamma-synergin. Interacts (via GAE doamin) with NECAP1 and NECAP2. Interacts (via GAE domain) with AFTPH/aftiphilin. Interacts with TSG101 and UBC. Interacts with RNF11. Interacts (via VHS domain) with BACE1 (via DXXLL motif); the interaction highly increases when BACE1 is phosphorylated at 'Ser-498'. Interacts with CNST. Interacts with ADRA2B. Interacts with ARL3; the interaction recruits, in collaboration with RABEP1, PKD1:PKD2 complex to trans-Golgi network and is required for ciliary targeting. Phosphorylated by CK2 and dephosphorylated by PP2A. Phosphorylation of GGA1 allows the internal DXXLL motif to bind the VHS domain and to inhibit the recognition of cargo signals. In terms of processing, ubiquitinated. In terms of tissue distribution, ubiquitously expressed.

It is found in the golgi apparatus. The protein resides in the trans-Golgi network membrane. The protein localises to the endosome membrane. Its subcellular location is the early endosome membrane. In terms of biological role, plays a role in protein sorting and trafficking between the trans-Golgi network (TGN) and endosomes. Mediates the ARF-dependent recruitment of clathrin to the TGN and binds ubiquitinated proteins and membrane cargo molecules with a cytosolic acidic cluster-dileucine (DXXLL) motif. Mediates export of the GPCR receptor ADRA2B to the cell surface. Required for targeting PKD1:PKD2 complex from the trans-Golgi network to the cilium membrane. Regulates retrograde transport of proteins such as phosphorylated form of BACE1 from endosomes to the trans-Golgi network. This is ADP-ribosylation factor-binding protein GGA1 (GGA1) from Homo sapiens (Human).